The following is a 388-amino-acid chain: bZIP transcription factor ABI5 homolog (388 aa).

Residues 1 to 36 (MASEMSKNVKVTDDQEVTSQERDQSGGTKVGGEEEI) form a disordered region. A Phosphoserine modification is found at S44. Residues 302 to 365 (VERRQRRMIK…KQMLVEKMME (64 aa)) form the bZIP domain. Residues 304–323 (RRQRRMIKNRESAARSRARK) form a basic motif region. Residues 330–344 (LEAELNYLKQENARL) form a leucine-zipper region. The disordered stretch occupies residues 368–388 (KEKMNANRGGSQLRRSGSCMW).

It belongs to the bZIP family. ABI5 subfamily. In terms of assembly, forms homodimers. Interacts with VP1. Interacts with GF14D. Interacts with PP2C51. Interacts with SAPK2. Phosphorylated at Ser-44 by SAPK6. Expressed in roots, leaves and panicles. Expressed in seeds.

It is found in the nucleus. Transcription factor that possesses transactivation activity in yeast. Involved in abscisic acid (ABA) signaling pathway. Binds to the G-box motif 5'-CACGTG-3' of TRAB1 gene promoter. Involved in the regulation of pollen maturation. May act as negative regulator of salt stress response. Together with PYL5, PP2C30 and SAPK2, is part of an ABA signaling unit that modulates seed germination and early seedling growth. This chain is bZIP transcription factor ABI5 homolog, found in Oryza sativa subsp. japonica (Rice).